Here is a 149-residue protein sequence, read N- to C-terminus: Large ribosomal subunit protein uL13 (149 aa).

Belongs to the universal ribosomal protein uL13 family. Part of the 50S ribosomal subunit.

In terms of biological role, this protein is one of the early assembly proteins of the 50S ribosomal subunit, although it is not seen to bind rRNA by itself. It is important during the early stages of 50S assembly. The protein is Large ribosomal subunit protein uL13 of Chlorobium phaeovibrioides (strain DSM 265 / 1930) (Prosthecochloris vibrioformis (strain DSM 265)).